The following is a 766-amino-acid chain: Pentatricopeptide repeat-containing protein At3g61520, mitochondrial (766 aa).

The transit peptide at 1–30 (MSIMLSISRRRNSYILLNHSRFLRRFSYDV) directs the protein to the mitochondrion. PPR repeat units follow at residues 151–181 (TVVATNLLIRWFGRMGMVNQSVLVYERLDSN), 184–218 (NSQVRNVVVDVLLRNGLVDDAFKVLDEMLQKESVF), 221–257 (NRITADIVLHEVWKGRLLTEEKIIALISRFSSHGVSP), 258–292 (NSVWLTRFISSLCKNARANAAWDILSDLMKNKTPL), 293–327 (EAPPFNALLSCLGRNMDISRMNDLVLKMDEVKIRP), 328–358 (DVVTLGILINTLCKSRRVDEALEVFEKMRGK), 369–404 (DSIHFNTLIDGLCKVGRLKEAEELLVRMKLEERCAP), 405–439 (NAVTYNCLIDGYCRAGKLETAKEVVSRMKEDEIKP), 440–474 (NVVTVNTIVGGMCRHHGLNMAVVFFMDMEKEGVKG), 475–509 (NVVTYMTLIHACCSVSNVEKAMYWYEKMLEAGCSP), 510–544 (DAKIYYALISGLCQVRRDHDAIRVVEKLKEGGFSL), 545–579 (DLLAYNMLIGLFCDKNNTEKVYEMLTDMEKEGKKP), 580–614 (DSITYNTLISFFGKHKDFESVERMMEQMREDGLDP), 615–650 (TVTTYGAVIDAYCSVGELDEALKLFKDMGLHSKVNP), 651–685 (NTVIYNILINAFSKLGNFGQALSLKEEMKMKMVRP), and 686–720 (NVETYNALFKCLNEKTQGETLLKLMDEMVEQSCEP).

The protein belongs to the PPR family. P subfamily.

The protein resides in the mitochondrion. This Arabidopsis thaliana (Mouse-ear cress) protein is Pentatricopeptide repeat-containing protein At3g61520, mitochondrial.